Reading from the N-terminus, the 161-residue chain is MPAPILPLIEAASRWPERGALVGLDLGTKTIGVAVSDPDRRLATGVETIQRKAFKADAARLLAISSERKVVGFVLGLPINMDGSEGPRAQSTRAFARNLANLTDLPIGLWDERLSTAAVERELIGMDVSRARRAEVIDTHAAIFILQGALDRLATLRRSGQ.

This sequence belongs to the YqgF nuclease family.

Its subcellular location is the cytoplasm. In terms of biological role, could be a nuclease involved in processing of the 5'-end of pre-16S rRNA. The protein is Putative pre-16S rRNA nuclease of Bradyrhizobium sp. (strain BTAi1 / ATCC BAA-1182).